A 509-amino-acid polypeptide reads, in one-letter code: Bifunctional purine biosynthesis protein PurH (509 aa).

Residues 1 to 144 (MKRALLSVSD…KNARDVIVVV (144 aa)) enclose the MGS-like domain.

This sequence belongs to the PurH family.

It carries out the reaction (6R)-10-formyltetrahydrofolate + 5-amino-1-(5-phospho-beta-D-ribosyl)imidazole-4-carboxamide = 5-formamido-1-(5-phospho-D-ribosyl)imidazole-4-carboxamide + (6S)-5,6,7,8-tetrahydrofolate. It catalyses the reaction IMP + H2O = 5-formamido-1-(5-phospho-D-ribosyl)imidazole-4-carboxamide. It functions in the pathway purine metabolism; IMP biosynthesis via de novo pathway; 5-formamido-1-(5-phospho-D-ribosyl)imidazole-4-carboxamide from 5-amino-1-(5-phospho-D-ribosyl)imidazole-4-carboxamide (10-formyl THF route): step 1/1. The protein operates within purine metabolism; IMP biosynthesis via de novo pathway; IMP from 5-formamido-1-(5-phospho-D-ribosyl)imidazole-4-carboxamide: step 1/1. The protein is Bifunctional purine biosynthesis protein PurH of Oenococcus oeni (strain ATCC BAA-331 / PSU-1).